Consider the following 338-residue polypeptide: Phytanoyl-CoA dioxygenase, peroxisomal (338 aa).

A peroxisome-targeting transit peptide spans 1–30 (MEQLRAAARLQIVLGHLGRPSAGAVVAHPT). N6-succinyllysine is present on residues lysine 59 and lysine 108. Residues lysine 120, methionine 157, 175–177 (HQD), and tryptophan 193 contribute to the 2-oxoglutarate site. Fe cation is bound by residues histidine 175 and aspartate 177. Lysine 231 and lysine 252 each carry N6-succinyllysine. Histidine 264 lines the Fe cation pocket. 2-oxoglutarate-binding residues include serine 266 and arginine 275. Serine 317 carries the phosphoserine modification.

This sequence belongs to the PhyH family. Interacts with FKBP52. Interacts with PHYHIP. The cofactor is Fe cation. Requires L-ascorbate as cofactor. It depends on ATP as a cofactor. Mg(2+) serves as cofactor. In terms of tissue distribution, expressed in liver, kidney, and T-cells, but not in spleen, brain, heart, lung and skeletal muscle.

Its subcellular location is the peroxisome. The catalysed reaction is phytanoyl-CoA + 2-oxoglutarate + O2 = 2-hydroxyphytanoyl-CoA + succinate + CO2. It catalyses the reaction 3-methylhexadecanoyl-CoA + 2-oxoglutarate + O2 = 2-hydroxy-3-methylhexadecanoyl-CoA + succinate + CO2. It carries out the reaction hexadecanoyl-CoA + 2-oxoglutarate + O2 = 2-hydroxyhexadecanoyl-CoA + succinate + CO2. The enzyme catalyses octanoyl-CoA + 2-oxoglutarate + O2 = 2-hydroxyoctanoyl-CoA + succinate + CO2. The catalysed reaction is decanoyl-CoA + 2-oxoglutarate + O2 = 2-hydroxydecanoyl-CoA + succinate + CO2. It catalyses the reaction 3-methylbutanoyl-CoA + 2-oxoglutarate + O2 = 2-hydroxy-3-methylbutanoyl-CoA + succinate + CO2. It carries out the reaction heptadecanoyl-CoA + 2-oxoglutarate + O2 = 2-hydroxyheptadecanoyl-CoA + succinate + CO2. The enzyme catalyses eicosanoyl-CoA + 2-oxoglutarate + O2 = 2-hydroxyeicosanoyl-CoA + succinate + CO2. The catalysed reaction is octadecanoyl-CoA + 2-oxoglutarate + O2 = 2-hydroxyoctadecanoyl-CoA + succinate + CO2. It catalyses the reaction dodecanoyl-CoA + 2-oxoglutarate + O2 = 2-hydroxydodecanoyl-CoA + succinate + CO2. It carries out the reaction tetradecanoyl-CoA + 2-oxoglutarate + O2 = 2-hydroxytetradecanoyl-CoA + succinate + CO2. The enzyme catalyses hexanoyl-CoA + 2-oxoglutarate + O2 = 2-hydroxyhexanoyl-CoA + succinate + CO2. The catalysed reaction is butanoyl-CoA + 2-oxoglutarate + O2 = 2-hydroxybutanoyl-CoA + succinate + CO2. It catalyses the reaction 3-methylnonanoyl-CoA + 2-oxoglutarate + O2 = 2-hydroxy-3-methylnonanoyl-CoA + succinate + CO2. It carries out the reaction 3-methylundecanoyl-CoA + 2-oxoglutarate + O2 = 2-hydroxy-3-methylundecanoyl-CoA + succinate + CO2. The enzyme catalyses 3-methyldodecanoyl-CoA + 2-oxoglutarate + O2 = 2-hydroxy-3-methyldodecanoyl-CoA + succinate + CO2. It functions in the pathway lipid metabolism; fatty acid metabolism. Its function is as follows. Catalyzes the 2-hydroxylation of not only racemic phytanoyl-CoA and the isomers of 3-methylhexadecanoyl-CoA, but also a variety of other mono-branched 3-methylacyl-CoA esters (with a chain length of at least seven carbon atoms) and straight-chain acyl-CoA esters (with a chain length longer than four carbon atoms). Does not hydroxylate long and very long straight chain acyl-CoAs or 2-methyl- and 4-methyl-branched acyl-CoAs. The sequence is that of Phytanoyl-CoA dioxygenase, peroxisomal (PHYH) from Homo sapiens (Human).